The sequence spans 96 residues: MKIRPLHERVVVRRKEEETKTAGGIVLPGNAAEKPSQGEVLAVGEGRILDNGDVRPLAVKVGDKVVFGQYAGSTVKIDGEELLIMSESDIFGVIEG.

The protein belongs to the GroES chaperonin family. In terms of assembly, heptamer of 7 subunits arranged in a ring. Interacts with the chaperonin GroEL.

It is found in the cytoplasm. In terms of biological role, together with the chaperonin GroEL, plays an essential role in assisting protein folding. The GroEL-GroES system forms a nano-cage that allows encapsulation of the non-native substrate proteins and provides a physical environment optimized to promote and accelerate protein folding. GroES binds to the apical surface of the GroEL ring, thereby capping the opening of the GroEL channel. The polypeptide is Co-chaperonin GroES (Hahella chejuensis (strain KCTC 2396)).